The primary structure comprises 1361 residues: Protein transport protein SEC16B homolog (1361 aa).

Serine 46 is subject to Phosphoserine. Disordered stretches follow at residues 82–109 (NEGA…HSDA), 487–513 (VDDA…GRPP), 984–1013 (PVGG…QEAT), 1025–1062 (SSLM…GRTP), 1163–1204 (ENKS…ARGR), 1216–1235 (NPPG…VQTA), and 1306–1361 (SVNG…EVEL). The span at 491–503 (PQSFQSSQLFSPS) shows a compositional bias: low complexity. Over residues 996–1013 (TKGNLQGNEYQHQQQEAT) the composition is skewed to polar residues. Composition is skewed to polar residues over residues 1169-1200 (IPSN…NQFS), 1222-1234 (NSHT…SVQT), and 1308-1325 (NGDN…SWSG). Low complexity predominate over residues 1326–1354 (NFNTSFTPPTSPSTFKPVLLNSSSSSLGE).

This sequence belongs to the SEC16 family.

Its subcellular location is the golgi apparatus. The protein localises to the endoplasmic reticulum. Its function is as follows. Required for protein transport from the endoplasmic reticulum to the Golgi apparatus. This Arabidopsis thaliana (Mouse-ear cress) protein is Protein transport protein SEC16B homolog.